We begin with the raw amino-acid sequence, 209 residues long: MDSDETGFEHSGLWVSVLAGLLLGACQAHPIPDSSPLLQFGGQVRQRYLYTDDAQQTEAHLEIREDGTVGGAADQSPESLLQLKALKPGVIQILGVKTSRFLCQRPDGALYGSLHFDPEACSFRELLLEDGYNVYQSEAHGLPLHLPGNKSPHRDPAPRGPARFLPLPGLPPALPEPPGILAPQPPDVGSSDPLSMVGPSQGRSPSYAS.

The signal sequence occupies residues 1–28 (MDSDETGFEHSGLWVSVLAGLLLGACQA). The disordered stretch occupies residues 143–209 (PLHLPGNKSP…SQGRSPSYAS (67 aa)). Residues 168-186 (PGLPPALPEPPGILAPQPP) are compositionally biased toward pro residues.

This sequence belongs to the heparin-binding growth factors family. As to quaternary structure, interacts (via C-terminus) with KLB; this interaction is direct. Interacts with FGFR4.

The protein resides in the secreted. In terms of biological role, stimulates glucose uptake in differentiated adipocytes via the induction of glucose transporter SLC2A1/GLUT1 expression (but not SLC2A4/GLUT4 expression). Activity requires the presence of KLB. Regulates systemic glucose homeostasis and insulin sensitivity. In Homo sapiens (Human), this protein is Fibroblast growth factor 21 (FGF21).